The following is a 1336-amino-acid chain: Adhesion G protein-coupled receptor A2 (1336 aa).

An N-terminal signal peptide occupies residues 1 to 33 (MGAGGRRMPVPPARLLLLPLLPCLLLLAPGTRG). Residues 34–769 (APGCPVPIRG…AGGSGAGLHP (736 aa)) are Extracellular-facing. N84 and N101 each carry an N-linked (GlcNAc...) asparagine glycan. 4 LRR repeats span residues 85–106 (GTIT…SFLG), 109–130 (LLEK…AFLG), 133–154 (ELKR…TFQG), and 157–178 (RLLR…VFDE). A glycan (N-linked (GlcNAc...) asparagine) is linked at N162. The LRRCT domain occupies 190-241 (EFLTCDCRLRWLLPWARNHSLQLSERTLCAYPSALHAHALSSLQESQLRCEG). Positions 247-344 (THYLIPSLRQ…GNTSKKVEIV (98 aa)) constitute an Ig-like domain. A disulfide bridge connects residues C268 and C328. N275 carries N-linked (GlcNAc...) asparagine glycosylation. Positions 362–364 (RGD) match the RGD motif. A GAIN-B domain is found at 594–757 (FRCTTGRPNI…AVLMELNAFP (164 aa)). N602, N691, and N735 each carry an N-linked (GlcNAc...) asparagine glycan. Positions 711-757 (AAWWNQDGPGGWSSEGCRLRYSQPNVSSLYCQHLGNVAVLMELNAFP) are GPS. Cysteines 727 and 741 form a disulfide. A helical membrane pass occupies residues 770 to 790 (VVYPCTALLLLCLFSTIITYI). Topologically, residues 791–805 (LNHSSIHVSRKGWHM) are cytoplasmic. A helical membrane pass occupies residues 806–826 (LLNLCFHMAMTSAVFVGGVTL). Residues 827 to 830 (TNYQ) lie on the Extracellular side of the membrane. The helical transmembrane segment at 831 to 851 (MVCQAVGITLHYSSLSSLLWM) threads the bilayer. Residues 852-884 (GVKARVLHKELSWRAPPLEEGEAAPPGPRPMLR) lie on the Cytoplasmic side of the membrane. Residues 885 to 905 (FYLIAGGIPLIICGITAAVNI) traverse the membrane as a helical segment. Residues 906–922 (HNYRDHSPYCWLVWRPS) are Extracellular-facing. Residues 923-943 (LGAFYIPVALILPITWIYFLC) form a helical membrane-spanning segment. The Cytoplasmic segment spans residues 944–1016 (AGLHLRSHVA…DGVYSPGVQL (73 aa)). The chain crosses the membrane as a helical span at residues 1017–1037 (GALMTTHFLYLAMWACGALAV). At 1038–1044 (SQRWLPR) the chain is on the extracellular side. Residues 1045–1065 (VVCSCLYGVAASALGLFVFTH) traverse the membrane as a helical segment. The Cytoplasmic portion of the chain corresponds to 1066–1336 (HCARRRDVRA…TGLWKSETTV (271 aa)). The span at 1084–1095 (ASPSASHVPARA) shows a compositional bias: low complexity. The interval 1084–1310 (ASPSASHVPA…NGAPKGGKYE (227 aa)) is disordered. S1104 carries the phosphoserine modification. Low complexity predominate over residues 1110-1124 (GPASLKSSPSGSSGR). The segment covering 1133-1143 (TNLQVAQSQVC) has biased composition (polar residues). The span at 1166-1186 (PRHHNNLHHGRRVHKSRAKGH) shows a compositional bias: basic residues. A compositionally biased stretch (polar residues) spans 1213–1234 (SSESGSLHNSPSDSYPGSSRNS). The PDZ-binding signature appears at 1333-1336 (ETTV).

It belongs to the G-protein coupled receptor 2 family. Adhesion G-protein coupled receptor (ADGR) subfamily. Interacts with RECK; the interaction is direct. Interacts (via PDZ-binding motif) with DLG1 (via PDZ domains). The cleaved extracellular subunit interacts with the integrin heterodimer ITGAV:ITGB3. Glycosylated. In terms of processing, proteolytically cleaved into two subunits, an extracellular subunit and a seven-transmembrane subunit. Cleaved by thrombin (F2) and MMP1. Also cleaved by MMP9, with lower efficiency. Presence of the protein disulfide-isomerase P4HB at the cell surface is additionally required for shedding of the extracellular subunit, suggesting that the subunits are linked by disulfide bonds. Shedding is enhanced by the growth factor FGF2 and may promote cell survival during angiogenesis. In terms of tissue distribution, abundantly expressed in the vasculature of the developing embryo. Expression in normal adult tissues is specifically vascular with endothelial expression in CNS, including brain and retina and more widespread pericyte expression in the brain and organs, including the kidney, pancreas and corpus luteum.

The protein resides in the cell membrane. It is found in the cell projection. It localises to the filopodium. Its function is as follows. Endothelial receptor which functions together with RECK to enable brain endothelial cells to selectively respond to Wnt7 signals (WNT7A or WNT7B). Plays a key role in Wnt7-specific responses, such as endothelial cell sprouting and migration in the forebrain and neural tube, and establishment of the blood-brain barrier. Acts as a Wnt7-specific coactivator of canonical Wnt signaling: required to deliver RECK-bound Wnt7 to frizzled by assembling a higher-order RECK-ADGRA2-Fzd-LRP5-LRP6 complex. ADGRA2-tethering function does not rely on its G-protein coupled receptor (GPCR) structure but instead on its combined capacity to interact with RECK extracellularly and recruit the Dishevelled scaffolding protein intracellularly. Binds to the glycosaminoglycans heparin, heparin sulfate, chondroitin sulfate and dermatan sulfate. This Mus musculus (Mouse) protein is Adhesion G protein-coupled receptor A2.